A 399-amino-acid polypeptide reads, in one-letter code: Acetate kinase (399 aa).

Asn-7 is a binding site for Mg(2+). Lys-14 is a binding site for ATP. Arg-91 serves as a coordination point for substrate. Asp-148 functions as the Proton donor/acceptor in the catalytic mechanism. Residues 208-212, 283-285, and 331-335 contribute to the ATP site; these read HLGNG, DFR, and GIGEN. Residue Glu-384 participates in Mg(2+) binding.

Belongs to the acetokinase family. As to quaternary structure, homodimer. Requires Mg(2+) as cofactor. Mn(2+) serves as cofactor.

It is found in the cytoplasm. It catalyses the reaction acetate + ATP = acetyl phosphate + ADP. The protein operates within metabolic intermediate biosynthesis; acetyl-CoA biosynthesis; acetyl-CoA from acetate: step 1/2. In terms of biological role, catalyzes the formation of acetyl phosphate from acetate and ATP. Can also catalyze the reverse reaction. The polypeptide is Acetate kinase (Acetivibrio thermocellus (strain ATCC 27405 / DSM 1237 / JCM 9322 / NBRC 103400 / NCIMB 10682 / NRRL B-4536 / VPI 7372) (Clostridium thermocellum)).